Consider the following 368-residue polypeptide: tRNA/tmRNA (uracil-C(5))-methyltransferase (368 aa).

Q192, Y220, N225, E241, and D301 together coordinate S-adenosyl-L-methionine. C326 (nucleophile) is an active-site residue. The Proton acceptor role is filled by E360.

The protein belongs to the class I-like SAM-binding methyltransferase superfamily. RNA M5U methyltransferase family. TrmA subfamily.

It carries out the reaction uridine(54) in tRNA + S-adenosyl-L-methionine = 5-methyluridine(54) in tRNA + S-adenosyl-L-homocysteine + H(+). The enzyme catalyses uridine(341) in tmRNA + S-adenosyl-L-methionine = 5-methyluridine(341) in tmRNA + S-adenosyl-L-homocysteine + H(+). Dual-specificity methyltransferase that catalyzes the formation of 5-methyluridine at position 54 (m5U54) in all tRNAs, and that of position 341 (m5U341) in tmRNA (transfer-mRNA). The sequence is that of tRNA/tmRNA (uracil-C(5))-methyltransferase from Actinobacillus pleuropneumoniae serotype 7 (strain AP76).